A 69-amino-acid polypeptide reads, in one-letter code: Conotoxin SIVA (69 aa).

The signal sequence occupies residues 1 to 21 (MGMRMMFTVFLLVVLATTVVS). A propeptide spanning residues 22–38 (TPSDRASDGRNAAVHER) is cleaved from the precursor. Gln-39 bears the Pyrrolidone carboxylic acid mark. O-linked (HexNAc...) serine glycosylation is present at Ser-45. Pro-55, Pro-60, and Pro-61 each carry 4-hydroxyproline. Cys-68 is subject to Cysteine amide.

This sequence belongs to the conotoxin A superfamily. Contains 3 disulfide bonds. In terms of processing, O-linked glycan consists of Hex3-HexNAc2 pentasaccharide. Expressed by the venom duct.

It is found in the secreted. Its function is as follows. Neurotoxin with probable activity on sodium channel. Induces intense repetitive firing of the frog neuromuscular junction, leading to a tetanic contracture in muscle fiber (spastic paralysis). In vivo, shows the same effect as the whole venom when injected on fish. Intraperitoneal injection into fish induces a period of rapid swimming followed by a spastic paralysis with stiff fibrillating fins. At high doses, the peptide is lethal to both fish and mice. The sequence is that of Conotoxin SIVA from Conus striatus (Striated cone).